The following is a 329-amino-acid chain: UDP-2,3-diacylglucosamine pyrophosphatase LpxG (329 aa).

The helical transmembrane segment at 2–24 (FVSVGITASLTTILAAPVLTWVW) threads the bilayer. A divalent metal cation contacts are provided by Asp59, His61, Asp91, Asn123, His257, and His259.

It belongs to the metallophosphoesterase superfamily. LpxG family. It depends on Mn(2+) as a cofactor.

Its subcellular location is the cell inner membrane. The catalysed reaction is UDP-2,3-diacyl-alpha-D-glucosamine + H2O = 2,3-diacyl-alpha-D-glucosaminyl 1-phosphate + UMP + 2 H(+). Its pathway is glycolipid biosynthesis; lipid IV(A) biosynthesis. Its function is as follows. Hydrolyzes the pyrophosphate bond of UDP-2,3-diacylglucosamine to form 2,3-diacylglucosamine 1-phosphate (lipid X) and UMP by catalyzing the attack of water at the alpha-P atom. Involved in the biosynthesis of lipid A, a phosphorylated glycolipid that anchors the lipooligosaccharide (LOS) to the outer membrane of the cell. Can functionally complement lpxH deficiency in E.coli. Overexpression of LpxG results in toxic accumulation of lipid X and profoundly reduces the infectivity of C.trachomatis. Can utilize UDP-2-N,3-O-bis((3R)-3-hydroxytetradecanoyl)-alpha-D-glucosamine as substrate in vitro, but the substrate is likely UDP-2-N-((3R)-3-hydroxyicosanoyl),3-O-(tetradecanoyl)-alpha-D-glucosamine in vivo. The chain is UDP-2,3-diacylglucosamine pyrophosphatase LpxG from Chlamydia trachomatis serovar D (strain ATCC VR-885 / DSM 19411 / UW-3/Cx).